The sequence spans 303 residues: Aspartate carbamoyltransferase catalytic subunit (303 aa).

Positions 49 and 50 each coordinate carbamoyl phosphate. K77 is an L-aspartate binding site. Positions 99, 126, and 129 each coordinate carbamoyl phosphate. R159 and R211 together coordinate L-aspartate. Carbamoyl phosphate contacts are provided by S252 and P253.

Belongs to the aspartate/ornithine carbamoyltransferase superfamily. ATCase family. As to quaternary structure, heterododecamer (2C3:3R2) of six catalytic PyrB chains organized as two trimers (C3), and six regulatory PyrI chains organized as three dimers (R2).

It carries out the reaction carbamoyl phosphate + L-aspartate = N-carbamoyl-L-aspartate + phosphate + H(+). The protein operates within pyrimidine metabolism; UMP biosynthesis via de novo pathway; (S)-dihydroorotate from bicarbonate: step 2/3. Functionally, catalyzes the condensation of carbamoyl phosphate and aspartate to form carbamoyl aspartate and inorganic phosphate, the committed step in the de novo pyrimidine nucleotide biosynthesis pathway. In Listeria welshimeri serovar 6b (strain ATCC 35897 / DSM 20650 / CCUG 15529 / CIP 8149 / NCTC 11857 / SLCC 5334 / V8), this protein is Aspartate carbamoyltransferase catalytic subunit.